The chain runs to 527 residues: Amino acid transporter heavy chain SLC3A2 (527 aa).

The disordered stretch occupies residues Met1–Ala31. At Met1–Arg75 the chain is on the cytoplasmic side. Ser2 bears the Phosphoserine mark. A Phosphothreonine modification is found at Thr5. The span at Val7–Lys21 shows a compositional bias: basic and acidic residues. Residue Lys42 forms a Glycyl lysine isopeptide (Lys-Gly) (interchain with G-Cter in ubiquitin) linkage. Ser58 bears the Phosphoserine mark. Lys59 participates in a covalent cross-link: Glycyl lysine isopeptide (Lys-Gly) (interchain with G-Cter in SUMO2). The helical; Signal-anchor for type II membrane protein transmembrane segment at Trp76 to Val98 threads the bilayer. Residues Arg99–Ala527 are Extracellular-facing. N-linked (GlcNAc...) asparagine glycans are attached at residues Asn166, Asn249, Asn259, and Asn263. A Phosphoserine modification is found at Ser300. Asn318, Asn386, and Asn400 each carry an N-linked (GlcNAc...) asparagine glycan. Position 421 is a phosphoserine (Ser421). A glycan (N-linked (GlcNAc...) asparagine) is linked at Asn510.

The protein belongs to the SLC3A transporter family. In terms of assembly, disulfide-linked heterodimer with a non-glycosylated light chain (SLC7A5, SLC7A6, SLC7A7, SLC7A8, SLC7A10 or SLC7A11). Interacts with TLCD3A/CT120 and ICAM1. Constitutively and specifically associates with beta-1 integrins (alpha-2/beta-1, alpha-3/beta-1, alpha-5/beta-1 and alpha-6/beta-1), but minimally with alpha-4/beta-1. Interacts with LAPTM4B; recruits SLC3A2 and SLC7A5 to lysosomes to promote leucine uptake into these organelles and is required for mTORC1 activation. Post-translationally, phosphorylation on Ser-300 and on Ser-421 by ecto-protein kinases favors heterotypic cell-cell interactions. N-glycosylated; N-glycosylation is crucial for trafficking and stability of SLC3A2 to the plasma membrane. In terms of tissue distribution, in brain expressed on capillary endothelia in cerebral cortex (at protein level). Highest expression in kidney, jejunum, ileum, colon, placenta, testis and spleen. Lower levels found in liver, lung and brain with weakest expression in heart. Expressed in retina, inner blood-retinal barrier of retina, retinal vascular endothelial cells. Also expressed in C6 glioma cells and in the retinal capillary endothelial cell line TR-iBRB2.

The protein localises to the apical cell membrane. It localises to the cell membrane. The protein resides in the cell junction. Its subcellular location is the lysosome membrane. It is found in the melanosome. The protein localises to the basolateral cell membrane. Acts as a chaperone that facilitates biogenesis and trafficking of functional transporters heterodimers to the plasma membrane. Forms heterodimer with SLC7 family transporters (SLC7A5, SLC7A6, SLC7A7, SLC7A8, SLC7A10 and SLC7A11), a group of amino-acid antiporters. Heterodimers function as amino acids exchangers, the specificity of the substrate depending on the SLC7A subunit. Heterodimers formed by SLC3A2/SLC7A6 or SLC3A2/SLC7A7 mediate the uptake of dibasic amino acids. Heterodimer SLC3A2/SLC7A11 functions as an antiporter by mediating the exchange of extracellular anionic L-cystine and intracellular L-glutamate across the cellular plasma membrane. SLC3A2/SLC7A10 translocates small neutral L- and D-amino acids across the plasma membrane. SLC3A2/SLC75 or SLC3A2/SLC7A8 translocates neutral amino acids with broad specificity, thyroid hormones and L-DOPA. SLC3A2 is essential for plasma membrane localization, stability, and the transport activity of SLC7A5 and SLC7A8. When associated with LAPTM4B, the heterodimer SLC7A5 is recruited to lysosomes to promote leucine uptake into these organelles, and thereby mediates mTORC1 activation. Modulates integrin-related signaling and is essential for integrin-dependent cell spreading, migration and tumor progression. This is Amino acid transporter heavy chain SLC3A2 from Rattus norvegicus (Rat).